We begin with the raw amino-acid sequence, 309 residues long: Dicarboxylate carrier UCP2 (309 aa).

Residues 1-16 are Mitochondrial intermembrane-facing; it reads MVGFKATDVPPTATVK. 3 Solcar repeats span residues 11–106, 114–203, and 212–297; these read PTAT…VKQF, AGIG…IKDA, and DDLP…LKRA. Residues 16-63 form an important for interaction with long-chain fatty acids region; the sequence is KFLGAGTAACIADLITFPLDTAKVRLQIQGERQGPVRAAASAQYRGVL. The chain crosses the membrane as a helical span at residues 17–40; that stretch reads FLGAGTAACIADLITFPLDTAKVR. At 41 to 77 the chain is on the mitochondrial matrix side; sequence LQIQGERQGPVRAAASAQYRGVLCTILTMVRTEGPRS. Residues 78-103 form a helical membrane-spanning segment; that stretch reads LYSGLVAGLQRQMSFASVRIGLYDSV. Over 104 to 119 the chain is Mitochondrial intermembrane; the sequence is KQFYTKGSEHAGIGSR. The chain crosses the membrane as a helical span at residues 120–145; sequence LLAGSTTGALAVAVAQPTDVVKVRFQ. The Mitochondrial matrix segment spans residues 146 to 173; that stretch reads AQARAGSGRRYQSTVDAYKTIAREEGFR. A helical membrane pass occupies residues 174-199; it reads GLWKGTSPNVARNAIVNCAELVTYDL. Residues 200–217 lie on the Mitochondrial intermembrane side of the membrane; sequence IKDALLKANLMTDDLPCH. The chain crosses the membrane as a helical span at residues 218-242; that stretch reads FTSAFGAGFCTTVIASPVDVVKTRY. Residues 243 to 268 are Mitochondrial matrix-facing; the sequence is MNSALGQYSSAGHCALTMLQKEGPRA. Residues 269–294 form a helical membrane-spanning segment; it reads FYKGFMPSFLRLGSWNVVMFVTYEQL. The segment at 278–285 is important for interaction with long-chain fatty acids; sequence LRLGSWNV. The Mitochondrial intermembrane portion of the chain corresponds to 295–309; the sequence is KRALMAACTSREAPF.

It belongs to the mitochondrial carrier (TC 2.A.29) family. As to quaternary structure, homotetramer. Adopts an asymmetrical dimer of dimers functional form. Interacts with MICU1 (when methylated); leading to decrease the calcium sensitivity of MICU1.

It is found in the mitochondrion inner membrane. It carries out the reaction L-aspartate(out) + phosphate(in) + H(+)(in) = L-aspartate(in) + phosphate(out) + H(+)(out). It catalyses the reaction oxaloacetate(out) + phosphate(in) + H(+)(in) = oxaloacetate(in) + phosphate(out) + H(+)(out). The enzyme catalyses (S)-malate(out) + phosphate(in) + H(+)(in) = (S)-malate(in) + phosphate(out) + H(+)(out). The catalysed reaction is malonate(out) + phosphate(in) + H(+)(in) = malonate(in) + phosphate(out) + H(+)(out). It carries out the reaction sulfate(out) + phosphate(in) + H(+)(in) = sulfate(in) + phosphate(out) + H(+)(out). It catalyses the reaction (S)-malate(out) = (S)-malate(in). The enzyme catalyses L-aspartate(out) = L-aspartate(in). The catalysed reaction is phosphate(in) = phosphate(out). It carries out the reaction chloride(in) = chloride(out). It catalyses the reaction H(+)(in) = H(+)(out). The enzyme catalyses a long-chain fatty acid(out) = a long-chain fatty acid(in). Its function is as follows. Antiporter that exports dicarboxylate intermediates of the Krebs cycle in exchange for phosphate plus a proton across the inner membrane of mitochondria, a process driven by mitochondrial motive force with an overall impact on glycolysis, glutaminolysis and glutathione-dependent redox balance. Continuous export of oxaloacetate and related four-carbon dicarboxylates from mitochondrial matrix into the cytosol negatively regulates the oxidation of acetyl-CoA substrates via the Krebs cycle lowering the ATP/ADP ratio and reactive oxygen species (ROS) production. May mediate inducible proton entry into the mitochondrial matrix affecting ATP turnover as a protection mechanism against oxidative stress. The proton currents are most likely associated with fatty acid flipping across the inner membrane of mitochondria in a metabolic process regulated by free fatty acids and purine nucleotides. Regulates the use of glucose as a source of energy. Required for glucose-induced DRP1-dependent mitochondrial fission and neuron activation in the ventromedial nucleus of the hypothalamus (VMH). This mitochondrial adaptation mechanism modulates the VMH pool of glucose-excited neurons with an impact on systemic glucose homeostasis. Regulates ROS levels and metabolic reprogramming of macrophages during the resolution phase of inflammation. Attenuates ROS production in response to IL33 to preserve the integrity of the Krebs cycle required for persistent production of itaconate and subsequent GATA3-dependent differentiation of inflammation-resolving alternatively activated macrophages. Can unidirectionally transport anions including L-malate, L-aspartate, phosphate and chloride ions. Does not mediate adaptive thermogenesis. The protein is Dicarboxylate carrier UCP2 (UCP2) of Canis lupus familiaris (Dog).